The following is a 429-amino-acid chain: Nocturnin (429 aa).

Residues 1–73 (MYQSPRRLCS…SMGNGTSRLY (73 aa)) constitute a mitochondrion transit peptide. The segment at 21 to 68 (RRTLVPGPRRTLAPPVLGSRPKSPQLQAAAASGAARSRPRTVSSMGNG) is disordered. Glu193 lines the Mg(2+) pocket. Residues Glu193, 217–219 (KPW), Asn261, 284–287 (HLKA), and 322–324 (DFN) each bind substrate. Residues 341–351 (NLNSAYKLLSP) are interaction with PPARG. Residue His412 coordinates substrate.

This sequence belongs to the CCR4/nocturin family. In terms of assembly, interacts with PPARG. It depends on Mg(2+) as a cofactor. As to expression, highly expressed in the differentiated adipocyte (at protein level). Ubiquitous.

It localises to the cytoplasm. The protein localises to the nucleus. It is found in the perinuclear region. The protein resides in the mitochondrion. The enzyme catalyses NADP(+) + H2O = phosphate + NAD(+). The catalysed reaction is NADPH + H2O = phosphate + NADH. In terms of biological role, phosphatase which catalyzes the conversion of NADP(+) to NAD(+) and of NADPH to NADH. Shows a small preference for NADPH over NADP(+). Represses translation and promotes degradation of target mRNA molecules. Plays an important role in post-transcriptional regulation of metabolic genes under circadian control. Exerts a rhythmic post-transcriptional control of genes necessary for metabolic functions including nutrient absorption, glucose/insulin sensitivity, lipid metabolism, adipogenesis, inflammation and osteogenesis. Plays an important role in favoring adipogenesis over osteoblastogenesis and acts as a key regulator of the adipogenesis/osteogenesis balance. Promotes adipogenesis by facilitating PPARG nuclear translocation which activates its transcriptional activity. Regulates circadian expression of NOS2 in the liver and negatively regulates the circadian expression of IGF1 in the bone. Critical for proper development of early embryos. This Mus musculus (Mouse) protein is Nocturnin.